The chain runs to 143 residues: Protein SLC31A2 (143 aa).

The Extracellular portion of the chain corresponds to 1–22 (MAMHFIFSDTAVLLFDFWSVHS). Residues 23–43 (PAGMALSVLVLLLLAVLYEGI) traverse the membrane as a helical segment. Residues 44 to 93 (KVGKAKLLNQVLVNLPTSISQQTIAETDGDSAGSDSFPVGRTHHRWYLCH) lie on the Cytoplasmic side of the membrane. Phosphoserine is present on Ser-77. A helical membrane pass occupies residues 94–114 (FGQSLIHVIQVVIGYFIMLAV). The Extracellular segment spans residues 115–119 (MSYNT). A helical transmembrane segment spans residues 120–140 (WIFLGVVLGSAVGYYLAYPLL). The Cytoplasmic segment spans residues 141-143 (STA).

The protein belongs to the copper transporter (Ctr) (TC 1.A.56) family. SLC31A subfamily. Oligomer. Interacts with SLC31A1; this interaction stabilizes SLC31A2 and protects it from ubiquitination and the subsequent degradation. Ubiquitinated; ubiquitination and the subsequent proteasomal degradation are prevent by SLC31A1 that stabilizes it. In terms of tissue distribution, ubiquitous with high expression in placenta and heart.

It is found in the membrane. Its subcellular location is the cytoplasmic vesicle membrane. It localises to the late endosome membrane. The protein resides in the lysosome membrane. Its function is as follows. Does not function as a copper(1+) importer in vivo. However, in vitro functions as a low-affinity copper(1+) importer. Regulator of SLC31A1 which facilitates the cleavage of the SLC31A1 ecto-domain or which stabilizes the truncated form of SLC31A1 (Truncated CTR1 form), thereby drives the SLC31A1 truncated form-dependent endosomal copper export and modulates the copper and cisplatin accumulation via SLC31A1. This Homo sapiens (Human) protein is Protein SLC31A2.